A 177-amino-acid chain; its full sequence is Ribonuclease clavin (177 aa).

An N-terminal signal peptide occupies residues 1 to 27 (MVAIKNLVLVALTAVTALAMPSPLEER). 2 disulfides stabilise this stretch: cysteine 33/cysteine 175 and cysteine 103/cysteine 159. The active site involves histidine 77. A disordered region spans residues 98 to 117 (WGNSDCDRPPKHSKNGDGKN). Positions 102-117 (DCDRPPKHSKNGDGKN) are enriched in basic and acidic residues. Glutamate 123 acts as the Proton acceptor in catalysis. Histidine 164 serves as the catalytic Proton donor.

This sequence belongs to the ribonuclease U2 family.

It localises to the secreted. Clavin has the same substrate specificity as alpha-sarcin. It is specific for purines in both single- and double-stranded RNA. Its toxic action on eukaryotic cells is the result of cleavage of a single phosphodiester bond in the 60S subunit of ribosomes. This chain is Ribonuclease clavin (cla), found in Aspergillus clavatus (strain ATCC 1007 / CBS 513.65 / DSM 816 / NCTC 3887 / NRRL 1 / QM 1276 / 107).